Reading from the N-terminus, the 388-residue chain is Quinolone resistance protein NorA (388 aa).

Helical transmembrane passes span 5 to 25 (IFVL…VIPV), 42 to 62 (LLVA…GTLA), 69 to 89 (LIIC…AVGH), 99 to 119 (VIGG…IADI), 129 to 149 (FGYM…IGGF), 157 to 177 (MPFY…IVLI), 201 to 221 (WKVF…LSAF), 239 to 259 (DISI…IYFF), 269 to 289 (LTFI…LVFA), 293 to 313 (WSIM…RPAI), 331 to 351 (LNST…GALF), and 355 to 375 (IEAP…IVLI).

The protein belongs to the major facilitator superfamily. TCR/Tet family.

The protein resides in the cell membrane. Its function is as follows. Involved in quinolone resistance. May constitute a membrane-associated active efflux pump of hydrophilic quinolones. This chain is Quinolone resistance protein NorA (norA), found in Staphylococcus aureus (strain MSSA476).